The primary structure comprises 466 residues: Glutamate--tRNA ligase 1 (466 aa).

The 'HIGH' region motif lies at 9 to 19; it reads PSPTGMLHIGG. Residues 238-242 carry the 'KMSKS' region motif; it reads KLSKR. Lys241 lines the ATP pocket.

It belongs to the class-I aminoacyl-tRNA synthetase family. Glutamate--tRNA ligase type 1 subfamily. Monomer.

It is found in the cytoplasm. It catalyses the reaction tRNA(Glu) + L-glutamate + ATP = L-glutamyl-tRNA(Glu) + AMP + diphosphate. In terms of biological role, catalyzes the attachment of glutamate to tRNA(Glu) in a two-step reaction: glutamate is first activated by ATP to form Glu-AMP and then transferred to the acceptor end of tRNA(Glu). The sequence is that of Glutamate--tRNA ligase 1 from Acidiphilium cryptum (strain JF-5).